The chain runs to 392 residues: Glucan endo-1,3-beta-glucosidase 14 (392 aa).

Positions 1–21 (MATHSLSFFFRVLLLLFLTLS) are cleaved as a signal peptide. N-linked (GlcNAc...) asparagine glycosylation is found at N54 and N89. The Proton donor role is filled by E122. E267 (nucleophile) is an active-site residue. S359 carries the GPI-anchor amidated serine lipid modification. Positions 360–392 (RATTIKILNLWRVVMGLAVAWFILDMGDKMRMR) are cleaved as a propeptide — removed in mature form.

Belongs to the glycosyl hydrolase 17 family.

The protein resides in the cell membrane. It localises to the secreted. The protein localises to the cell wall. Its subcellular location is the cytoplasm. It catalyses the reaction Hydrolysis of (1-&gt;3)-beta-D-glucosidic linkages in (1-&gt;3)-beta-D-glucans.. The protein is Glucan endo-1,3-beta-glucosidase 14 of Arabidopsis thaliana (Mouse-ear cress).